The sequence spans 252 residues: Ubiquitin carboxyl-terminal hydrolase isozyme L1 (252 aa).

Position 1 is an N-acetylmethionine (M1). Residues 2 to 250 (QLKPMEINPE…VRFSAVALCK (249 aa)) form the UCH catalytic domain. Positions 5–10 (PMEINP) are interaction with ubiquitin. C119 acts as the Nucleophile in catalysis. Position 154 is a phosphoserine (S154). H190 functions as the Proton donor in the catalytic mechanism. The interval 240–245 (EVRFSA) is interaction with ubiquitin. C249 carries the S-farnesyl cysteine lipid modification. Residues 250 to 252 (KAA) constitute a propeptide, removed in mature form.

It belongs to the peptidase C12 family. In terms of assembly, monomer. Homodimer. Interacts with COPS5 and SNCA. In terms of processing, O-glycosylated. Neurons and cells of the diffuse neuroendocrine system and their tumors.

It localises to the cytoplasm. The protein localises to the endoplasmic reticulum membrane. The enzyme catalyses Thiol-dependent hydrolysis of ester, thioester, amide, peptide and isopeptide bonds formed by the C-terminal Gly of ubiquitin (a 76-residue protein attached to proteins as an intracellular targeting signal).. In terms of biological role, ubiquitin-protein hydrolase involved both in the processing of ubiquitin precursors and of ubiquitinated proteins. This enzyme is a thiol protease that recognizes and hydrolyzes a peptide bond at the C-terminal glycine of ubiquitin. Also binds to free monoubiquitin and may prevent its degradation in lysosomes. The homodimer may have ATP-independent ubiquitin ligase activity. The protein is Ubiquitin carboxyl-terminal hydrolase isozyme L1 (UCHL1) of Bos taurus (Bovine).